The sequence spans 238 residues: Ribonuclease PH (238 aa).

Phosphate contacts are provided by residues Arg86 and 124–126; that span reads GTR.

Belongs to the RNase PH family. Homohexameric ring arranged as a trimer of dimers.

The enzyme catalyses tRNA(n+1) + phosphate = tRNA(n) + a ribonucleoside 5'-diphosphate. Phosphorolytic 3'-5' exoribonuclease that plays an important role in tRNA 3'-end maturation. Removes nucleotide residues following the 3'-CCA terminus of tRNAs; can also add nucleotides to the ends of RNA molecules by using nucleoside diphosphates as substrates, but this may not be physiologically important. Probably plays a role in initiation of 16S rRNA degradation (leading to ribosome degradation) during starvation. The polypeptide is Ribonuclease PH (Vibrio vulnificus (strain CMCP6)).